Here is a 193-residue protein sequence, read N- to C-terminus: Mediator of RNA polymerase II transcription subunit 20 (193 aa).

The protein belongs to the Mediator complex subunit 20 family. Component of the Mediator complex.

The protein resides in the nucleus. Functionally, component of the Mediator complex, a coactivator involved in the regulated transcription of nearly all RNA polymerase II-dependent genes. Mediator functions as a bridge to convey information from gene-specific regulatory proteins to the basal RNA polymerase II transcription machinery. The Mediator complex, having a compact conformation in its free form, is recruited to promoters by direct interactions with regulatory proteins and serves for the assembly of a functional preinitiation complex with RNA polymerase II and the general transcription factors. The sequence is that of Mediator of RNA polymerase II transcription subunit 20 (med20) from Schizosaccharomyces pombe (strain 972 / ATCC 24843) (Fission yeast).